We begin with the raw amino-acid sequence, 709 residues long: Peptidoglycan D,D-transpeptidase FtsI homolog (709 aa).

The chain crosses the membrane as a helical span at residues 20 to 42; the sequence is LQGIYYAFLSISTMIKIALDPYS. Serine 341 (acyl-ester intermediate) is an active-site residue.

This sequence belongs to the transpeptidase family.

The protein localises to the plastid. The protein resides in the chloroplast membrane. The catalysed reaction is Preferential cleavage: (Ac)2-L-Lys-D-Ala-|-D-Ala. Also transpeptidation of peptidyl-alanyl moieties that are N-acyl substituents of D-alanine.. This chain is Peptidoglycan D,D-transpeptidase FtsI homolog (ftsI), found in Nephroselmis olivacea (Green alga).